We begin with the raw amino-acid sequence, 280 residues long: C-type lectin domain family 1 member A (280 aa).

Residues 1 to 44 (MQAKYSSTRDMLDDDGDTTMSLHSQGSATTRHPEPRRTEHRAPS) are disordered. The Cytoplasmic portion of the chain corresponds to 1–52 (MQAKYSSTRDMLDDDGDTTMSLHSQGSATTRHPEPRRTEHRAPSSTWRPVAL). Residues 18 to 30 (TTMSLHSQGSATT) are compositionally biased toward polar residues. Residues 31-42 (RHPEPRRTEHRA) show a composition bias toward basic and acidic residues. A helical; Signal-anchor for type II membrane protein transmembrane segment spans residues 53–73 (TLLTLCLVLLIGLAALGLLFF). At 74–280 (QYYQLSNTGQ…VPPETLGEGD (207 aa)) the chain is on the extracellular side. N-linked (GlcNAc...) asparagine glycosylation is found at N95 and N169. A C-type lectin domain is found at 144 to 258 (HGDNCYQFYK…CKELKRCVCE (115 aa)). Cystine bridges form between C165-C257 and C236-C249.

As to expression, expressed preferentially in dendritic cells.

It localises to the membrane. The sequence is that of C-type lectin domain family 1 member A (CLEC1A) from Homo sapiens (Human).